A 181-amino-acid polypeptide reads, in one-letter code: Large ribosomal subunit protein uL5 (181 aa).

It belongs to the universal ribosomal protein uL5 family. Part of the 50S ribosomal subunit; part of the 5S rRNA/L5/L18/L25 subcomplex. Contacts the 5S rRNA and the P site tRNA. Forms a bridge to the 30S subunit in the 70S ribosome.

Its function is as follows. This is one of the proteins that bind and probably mediate the attachment of the 5S RNA into the large ribosomal subunit, where it forms part of the central protuberance. In the 70S ribosome it contacts protein S13 of the 30S subunit (bridge B1b), connecting the 2 subunits; this bridge is implicated in subunit movement. Contacts the P site tRNA; the 5S rRNA and some of its associated proteins might help stabilize positioning of ribosome-bound tRNAs. This is Large ribosomal subunit protein uL5 from Aster yellows witches'-broom phytoplasma (strain AYWB).